The sequence spans 217 residues: Magnetosome protein MamA (217 aa).

6 TPR repeats span residues 12-44 (VTLY…NDDI), 46-79 (QVYY…DAFD), 80-113 (VEVA…APDN), 114-147 (IKVA…NPVN), 148-181 (FNVR…RPNE), and 182-215 (GKVH…DERS). The N-terminal domain stretch occupies residues 41–112 (NDDIRQVYYR…LERSIADAPD (72 aa)). Positions 113-217 (NIKVATVLGL…ANELDERSAV (105 aa)) are C-terminal domain.

The protein belongs to the magnetosome MamA family. In terms of assembly, forms round, 20 nm diameter complexes with a central cavity. Probably binds MamC. Interacts with full-length Mms6.

It localises to the magnetosome membrane. Its function is as follows. Probably forms a large homooligomer on which other magnetosome subunits assemble. Required for formation of functional magnetosomes from pre-existing vesicles. This Magnetospirillum gryphiswaldense (strain DSM 6361 / JCM 21280 / NBRC 15271 / MSR-1) protein is Magnetosome protein MamA.